A 118-amino-acid chain; its full sequence is Flowering-promoting factor 1-like protein 4 (118 aa).

Belongs to the FPF1 family.

The chain is Flowering-promoting factor 1-like protein 4 from Oryza sativa subsp. japonica (Rice).